The chain runs to 171 residues: Adenine phosphoribosyltransferase (171 aa).

This sequence belongs to the purine/pyrimidine phosphoribosyltransferase family. As to quaternary structure, homodimer.

It localises to the cytoplasm. It catalyses the reaction AMP + diphosphate = 5-phospho-alpha-D-ribose 1-diphosphate + adenine. It functions in the pathway purine metabolism; AMP biosynthesis via salvage pathway; AMP from adenine: step 1/1. Functionally, catalyzes a salvage reaction resulting in the formation of AMP, that is energically less costly than de novo synthesis. The chain is Adenine phosphoribosyltransferase from Methylococcus capsulatus (strain ATCC 33009 / NCIMB 11132 / Bath).